The chain runs to 1838 residues: Collagen alpha-1(V) chain (1838 aa).

The N-terminal stretch at Met1 to Ala36 is a signal peptide. In terms of domain architecture, Laminin G-like spans Asp72 to Cys244. The nonhelical region stretch occupies residues Arg231–Glu443. Residues Tyr234, Tyr236, Tyr240, Tyr262, and Tyr263 each carry the sulfotyrosine modification. Disordered regions lie at residues Pro242–Gln545 and Gly559–Gln1574. The span at Asn258–Gly268 shows a compositional bias: acidic residues. Low complexity-rich tracts occupy residues Asp335–Tyr345, Val374–Pro387, Tyr413–Ser428, and Ile460–Gly469. An interrupted collagenous region region spans residues Gly444–Arg558. The segment covering Pro470–Thr485 has biased composition (pro residues). 2 stretches are compositionally biased toward low complexity: residues Leu506 to Pro523 and Gly559 to Pro570. The tract at residues Gly559–Gly1570 is triple-helical region. 3 positions are modified to 4-hydroxyproline: Pro570, Pro576, and Pro621. Lys627 bears the 5-hydroxylysine mark. Pro639 carries the post-translational modification 4-hydroxyproline. Residue Lys642 is modified to 5-hydroxylysine. A 4-hydroxyproline mark is found at Pro648, Pro654, Pro657, Pro675, and Pro678. A compositionally biased stretch (low complexity) spans Pro671–Pro686. A 3-hydroxyproline mark is found at Pro680 and Pro686. The span at Lys687–Pro696 shows a compositional bias: pro residues. 3 positions are modified to 4-hydroxyproline: Pro690, Pro696, and Pro705. A 5-hydroxylysine modification is found at Lys708. Residues Pro717, Pro720, Pro726, and Pro732 each carry the 4-hydroxyproline modification. Positions Gln722–Pro741 are enriched in low complexity. The residue at position 744 (Lys744) is a 5-hydroxylysine. A compositionally biased stretch (low complexity) spans Leu747 to Pro756. 4-hydroxyproline occurs at positions 750, 756, 762, 765, and 771. At Lys774 the chain carries 5-hydroxylysine. Pro780 and Pro789 each carry 4-hydroxyproline. Residues Lys795, Lys804, Lys807, and Lys810 each carry the 5-hydroxylysine modification. Pro816 carries the post-translational modification 4-hydroxyproline. At Lys819 the chain carries 5-hydroxylysine. Residue Pro834 is modified to 4-hydroxyproline. The segment covering Arg837–Lys846 has biased composition (basic and acidic residues). 5-hydroxylysine is present on residues Lys846 and Lys864. A 4-hydroxyproline mark is found at Pro870, Pro873, and Pro876. Lys882 bears the 5-hydroxylysine mark. Pro888 and Pro891 each carry 4-hydroxyproline. 5-hydroxylysine is present on Lys897. 2 positions are modified to 4-hydroxyproline: Pro903 and Pro906. Positions Pro908–Pro917 are enriched in low complexity. 4-hydroxyproline occurs at positions 930 and 945. 2 stretches are compositionally biased toward low complexity: residues Lys971–Thr990 and Val999–Met1011. Residues Pro1017, Pro1020, Pro1023, and Pro1029 each carry the 4-hydroxyproline modification. Over residues Ser1088–Pro1104 the composition is skewed to low complexity. Residues Arg1106 to Pro1115 show a composition bias toward pro residues. 4-hydroxyproline is present on residues Pro1221 and Pro1224. Low complexity predominate over residues Pro1259–Pro1268. Gly residues predominate over residues Gly1294–Gly1303. 2 stretches are compositionally biased toward pro residues: residues Thr1380–Ala1398 and Ser1454–Leu1469. A 4-hydroxyproline mark is found at Pro1467 and Pro1470. Over residues Pro1485–Pro1494 the composition is skewed to low complexity. Residues Pro1526–Pro1541 show a composition bias toward pro residues. Low complexity predominate over residues Lys1542–Lys1554. The nonhelical region stretch occupies residues Glu1571–Ala1605. Tyr1601 and Tyr1604 each carry sulfotyrosine. The region spanning Glu1609–Leu1837 is the Fibrillar collagen NC1 domain.

This sequence belongs to the fibrillar collagen family. As to quaternary structure, trimers of two alpha 1(V) and one alpha 2(V) chains in most tissues and trimers of one alpha 1(V), one alpha 2(V), and one alpha 3(V) chains in placenta. Interacts with CSPG4. Hydroxylation on proline residues within the sequence motif, GXPG, is most likely to be 4-hydroxy as this fits the requirement for 4-hydroxylation in vertebrates. In terms of processing, sulfated on 40% of tyrosines. As to expression, widely expressed. Isoform 2 is more highly expressed in liver, kidney and lung.

It localises to the secreted. The protein localises to the extracellular space. The protein resides in the extracellular matrix. Type V collagen is a member of group I collagen (fibrillar forming collagen). It is a minor connective tissue component of nearly ubiquitous distribution. Type V collagen binds to DNA, heparan sulfate, thrombospondin, heparin, and insulin. Transcriptionally activated by CEBPZ, which recognizes a CCAAT-like motif, CAAAT in the COL5A1 promoter. The chain is Collagen alpha-1(V) chain (Col5a1) from Mus musculus (Mouse).